The sequence spans 500 residues: 4-aminobutyrate aminotransferase, mitochondrial (500 aa).

A mitochondrion-targeting transit peptide spans 1 to 27 (MAFLLTTRRLVCSSQKNLHLFTPGSRY). [2Fe-2S] cluster is bound at residue Cys163. Pyridoxal 5'-phosphate is bound at residue 164–165 (GS). Cys166 serves as a coordination point for [2Fe-2S] cluster. Substrate is bound at residue Arg220. N6-succinyllysine is present on Lys231. Residue Lys252 is modified to N6-acetyllysine; alternate. An N6-succinyllysine; alternate modification is found at Lys252. Residues Lys279 and Lys318 each carry the N6-acetyllysine modification. Lys357 is modified (N6-(pyridoxal phosphate)lysine). Residue Thr381 coordinates pyridoxal 5'-phosphate. At Lys413 the chain carries N6-acetyllysine; alternate. Lys413 is subject to N6-succinyllysine; alternate. N6-acetyllysine is present on residues Lys452 and Lys470.

It belongs to the class-III pyridoxal-phosphate-dependent aminotransferase family. In terms of assembly, homodimer; disulfide-linked. Requires pyridoxal 5'-phosphate as cofactor. [2Fe-2S] cluster serves as cofactor.

It localises to the mitochondrion matrix. It carries out the reaction 4-aminobutanoate + 2-oxoglutarate = succinate semialdehyde + L-glutamate. The catalysed reaction is (S)-3-amino-2-methylpropanoate + 2-oxoglutarate = 2-methyl-3-oxopropanoate + L-glutamate. Functionally, catalyzes the conversion of gamma-aminobutyrate and L-beta-aminoisobutyrate to succinate semialdehyde and methylmalonate semialdehyde, respectively. Can also convert delta-aminovalerate and beta-alanine. In Rattus norvegicus (Rat), this protein is 4-aminobutyrate aminotransferase, mitochondrial.